We begin with the raw amino-acid sequence, 562 residues long: Dihydroxy-acid dehydratase (562 aa).

Residue D80 participates in Mg(2+) binding. Residue C121 coordinates [2Fe-2S] cluster. Mg(2+) is bound by residues D122 and K123. K123 carries the post-translational modification N6-carboxylysine. C194 provides a ligand contact to [2Fe-2S] cluster. Residue E446 coordinates Mg(2+). Catalysis depends on S472, which acts as the Proton acceptor.

Belongs to the IlvD/Edd family. In terms of assembly, homodimer. It depends on [2Fe-2S] cluster as a cofactor. Mg(2+) is required as a cofactor.

It carries out the reaction (2R)-2,3-dihydroxy-3-methylbutanoate = 3-methyl-2-oxobutanoate + H2O. The catalysed reaction is (2R,3R)-2,3-dihydroxy-3-methylpentanoate = (S)-3-methyl-2-oxopentanoate + H2O. The protein operates within amino-acid biosynthesis; L-isoleucine biosynthesis; L-isoleucine from 2-oxobutanoate: step 3/4. It participates in amino-acid biosynthesis; L-valine biosynthesis; L-valine from pyruvate: step 3/4. Its function is as follows. Functions in the biosynthesis of branched-chain amino acids. Catalyzes the dehydration of (2R,3R)-2,3-dihydroxy-3-methylpentanoate (2,3-dihydroxy-3-methylvalerate) into 2-oxo-3-methylpentanoate (2-oxo-3-methylvalerate) and of (2R)-2,3-dihydroxy-3-methylbutanoate (2,3-dihydroxyisovalerate) into 2-oxo-3-methylbutanoate (2-oxoisovalerate), the penultimate precursor to L-isoleucine and L-valine, respectively. In Staphylococcus aureus (strain USA300 / TCH1516), this protein is Dihydroxy-acid dehydratase.